Here is a 598-residue protein sequence, read N- to C-terminus: Probable ATP-dependent RNA helicase DDX52 (598 aa).

Residue lysine 15 is modified to N6-acetyllysine. A Phosphoserine modification is found at serine 39. Residues 59-98 are disordered; the sequence is CGGLQTQQELQNEETTEGGLLERSKEPKKKKRKKMTADVP. The Q motif motif lies at 166 to 194; that stretch reads QLDQEYKISPRLLQNILDAGFQVPTPIQM. Residues 197 to 375 form the Helicase ATP-binding domain; that stretch reads IPVMLHGREL…KLNLDNIVSV (179 aa). Residue 210–217 coordinates ATP; it reads APTGSGKT. Positions 319–322 match the DEAD box motif; the sequence is DESD. In terms of domain architecture, Helicase C-terminal spans 386–547; that stretch reads TVEQELLFVG…PVPEYIKGFQ (162 aa). The tract at residues 578-598 is disordered; that stretch reads AKQKKVAGQNSKKKETLKGKS. The span at 589-598 shows a compositional bias: basic and acidic residues; the sequence is KKKETLKGKS.

The protein belongs to the DEAD box helicase family. DDX52/ROK1 subfamily.

It is found in the nucleus. Its subcellular location is the nucleolus. It catalyses the reaction ATP + H2O = ADP + phosphate + H(+). In terms of biological role, required for efficient ribosome biogenesis. May control cell cycle progression by regulating translation of mRNAs that contain a terminal oligo pyrimidine (TOP) motif in their 5' UTRs, such as GTPBP4. The polypeptide is Probable ATP-dependent RNA helicase DDX52 (Ddx52) (Rattus norvegicus (Rat)).